We begin with the raw amino-acid sequence, 312 residues long: Probable deoxyhypusine synthase (312 aa).

The active-site Nucleophile is Lys-285.

This sequence belongs to the deoxyhypusine synthase family. NAD(+) serves as cofactor.

It catalyses the reaction [eIF5A protein]-L-lysine + spermidine = [eIF5A protein]-deoxyhypusine + propane-1,3-diamine. The protein operates within protein modification; eIF5A hypusination. Functionally, catalyzes the NAD-dependent oxidative cleavage of spermidine and the subsequent transfer of the butylamine moiety of spermidine to the epsilon-amino group of a specific lysine residue of the eIF-5A precursor protein to form the intermediate deoxyhypusine residue. The protein is Probable deoxyhypusine synthase of Saccharolobus islandicus (strain M.16.4 / Kamchatka #3) (Sulfolobus islandicus).